The chain runs to 209 residues: NADH-ubiquinone oxidoreductase subunit 9 (209 aa).

Belongs to the complex I 30 kDa subunit family. Complex I is composed of about 45 different subunits.

It is found in the mitochondrion inner membrane. The catalysed reaction is a ubiquinone + NADH + 5 H(+)(in) = a ubiquinol + NAD(+) + 4 H(+)(out). In terms of biological role, core subunit of the mitochondrial membrane respiratory chain NADH dehydrogenase (Complex I) that is believed to belong to the minimal assembly required for catalysis. Complex I functions in the transfer of electrons from NADH to the respiratory chain. The immediate electron acceptor for the enzyme is believed to be ubiquinone. This is NADH-ubiquinone oxidoreductase subunit 9 (nad9) from Dictyostelium discoideum (Social amoeba).